Here is a 2161-residue protein sequence, read N- to C-terminus: Voltage-dependent L-type calcium channel subunit alpha-1D (2161 aa).

3 disordered regions span residues 1–21, 30–49, and 64–100; these read MMMM…ADHA, TRLP…SKQT, and KAAQ…SSNS. The Cytoplasmic segment spans residues 1-126; the sequence is MMMMMMMKKM…RACISIVEWK (126 aa). The segment covering 38–49 has biased composition (polar residues); it reads GPTSQPNSSKQT. The segment covering 82-93 has biased composition (basic residues); it reads QRKRQQYAKSKK. Residues 113-409 form an I repeat; that stretch reads NPIRRACISI…LVLGVLSGEF (297 aa). The helical transmembrane segment at 127-145 threads the bilayer; the sequence is PFDIFILLAIFANCVALAI. Residues 146–163 are Extracellular-facing; it reads YIPFPEDDSNSTNHNLEK. An N-linked (GlcNAc...) asparagine glycan is attached at N155. The helical transmembrane segment at 164-183 threads the bilayer; sequence VEYAFLIIFTVETFLKIIAY. Topologically, residues 184 to 195 are cytoplasmic; it reads GLLLHPNAYVRN. A helical transmembrane segment spans residues 196–214; sequence GWNLLDFVIVIVGLFSVIL. The Extracellular portion of the chain corresponds to 215-235; it reads EQLTKETEGGNHSSGKSGGFD. The N-linked (GlcNAc...) asparagine glycan is linked to N225. The helical transmembrane segment at 236-254 threads the bilayer; sequence VKALRAFRVLRPLRLVSGV. At 255 to 273 the chain is on the cytoplasmic side; the sequence is PSLQVVLNSIIKAMVPLLH. A helical membrane pass occupies residues 274–293; it reads IALLVLFVIIIYAIIGLELF. Over 294–381 the chain is Extracellular; sequence IGKMHKTCFF…WMNDAMGFEL (88 aa). N-linked (GlcNAc...) asparagine glycosylation is present at N329. E364 contributes to the Ca(2+) binding site. Residues 382 to 406 traverse the membrane as a helical segment; the sequence is PWVYFVSLVIFGSFFVLNLVLGVLS. The Cytoplasmic portion of the chain corresponds to 407–523; the sequence is GEFSKEREKA…RRCRAAVKSV (117 aa). Positions 429–446 are binding to the beta subunit; that stretch reads QQLEEDLKGYLDWITQAE. The tract at residues 449–482 is disordered; sequence DPENEEEGGEEGKRNTSMPTSETESVNTENVSGE. A compositionally biased stretch (polar residues) spans 463-479; the sequence is NTSMPTSETESVNTENV. An II repeat occupies 509 to 755; the sequence is NRFNRRRCRA…VFLAIAVDNL (247 aa). A helical transmembrane segment spans residues 524 to 543; the sequence is TFYWLVIVLVFLNTLTISSE. The Extracellular portion of the chain corresponds to 544–558; it reads HYNQPDWLTQIQDIA. Residues 559-577 traverse the membrane as a helical segment; that stretch reads NKVLLALFTCEMLVKMYSL. Topologically, residues 578–585 are cytoplasmic; the sequence is GLQAYFVS. A helical membrane pass occupies residues 586–604; the sequence is LFNRFDCFVVCGGITETIL. The Extracellular portion of the chain corresponds to 605–614; it reads VELEIMSPLG. The helical transmembrane segment at 615-633 threads the bilayer; that stretch reads ISVFRCVRLLRIFKVTRHW. The Cytoplasmic segment spans residues 634-652; sequence TSLSNLVASLLNSMKSIAS. Residues 653 to 673 form a helical membrane-spanning segment; it reads LLLLLFLFIIIFSLLGMQLFG. Topologically, residues 674 to 727 are extracellular; that stretch reads GKFNFDETQTKRSTFDNFPQALLTVFQILTGEDWNAVMYDGIMAYGGPSSSGMI. Ca(2+) is bound at residue E705. A helical transmembrane segment spans residues 728 to 752; sequence VCIYFIILFICGNYILLNVFLAIAV. Residues 753–886 are Cytoplasmic-facing; sequence DNLADAESLN…VGCHKLINHH (134 aa). Over residues 766–790 the composition is skewed to basic and acidic residues; the sequence is KEEAEEKERKKIARKESLENKKNNK. The disordered stretch occupies residues 766 to 850; sequence KEEAEEKERK…AGPRPRRISE (85 aa). Polar residues predominate over residues 791 to 802; that stretch reads PEVNQIANSDNK. The segment covering 825-838 has biased composition (acidic residues); it reads VGEEEEEEEEDEPE. The stretch at 873–1155 is one III repeat; it reads NPIRVGCHKL…IFVGFVIVTF (283 aa). A helical membrane pass occupies residues 887 to 905; the sequence is IFTNLILVFIMLSSAALAA. The Extracellular segment spans residues 906–921; it reads EDPIRSHSFRNTILGY. A helical membrane pass occupies residues 922-941; it reads FDYAFTAIFTVEILLKMTTF. Residues 942–953 are Cytoplasmic-facing; the sequence is GAFLHKGAFCRN. A helical transmembrane segment spans residues 954 to 972; the sequence is YFNLLDMLVVGVSLVSFGI. Residues 973 to 978 are Extracellular-facing; sequence QSSAIS. A helical membrane pass occupies residues 979–998; it reads VVKILRVLRVLRPLRAINRA. Over 999 to 1017 the chain is Cytoplasmic; that stretch reads KGLKHVVQCVFVAIRTIGN. The helical transmembrane segment at 1018 to 1037 threads the bilayer; that stretch reads IMIVTTLLQFMFACIGVQLF. Topologically, residues 1038–1127 are extracellular; it reads KGKFYRCTDE…IGPIYNHRVE (90 aa). The interval 1075-1165 is dihydropyridine binding; it reads RIWQNSDFNF…QEQGEKEYKN (91 aa). Residue E1101 coordinates Ca(2+). The helical transmembrane segment at 1128 to 1148 threads the bilayer; it reads ISIFFIIYIIIVAFFMMNIFV. At 1149–1205 the chain is on the cytoplasmic side; sequence GFVIVTFQEQGEKEYKNCELDKNQRQCVEYALKARPLRRYIPKNPYQYKFWYVVNSS. The IV repeat unit spans residues 1192 to 1467; that stretch reads NPYQYKFWYV…LFVAVIMDNF (276 aa). The chain crosses the membrane as a helical span at residues 1206 to 1224; it reads PFEYMMFVLIMLNTLCLAM. Over 1225-1239 the chain is Extracellular; it reads QHYEQSKMFNDAMDI. A helical membrane pass occupies residues 1240–1259; it reads LNMVFTGVFTVEMVLKVIAF. The Cytoplasmic portion of the chain corresponds to 1260–1266; it reads KPKGYFS. Residues 1267 to 1288 form a helical membrane-spanning segment; it reads DAWNTFDSLIVIGSIIDVALSE. At 1289–1313 the chain is on the extracellular side; the sequence is ADPTESENVPVPTATPGNSEESNRI. Residues 1314–1333 form a helical membrane-spanning segment; the sequence is SITFFRLFRVMRLVKLLSRG. The Cytoplasmic segment spans residues 1334-1352; sequence EGIRTLLWTFIKSFQALPY. The chain crosses the membrane as a helical span at residues 1353–1372; it reads VALLIAMLFFIYAVIGMQMF. The Extracellular portion of the chain corresponds to 1373–1439; the sequence is GKVAMRDNNQ…GEEYTCGSNF (67 aa). The segment at 1420 to 1486 is dihydropyridine binding; it reads LCDPESDYNP…LGPHHLDEFK (67 aa). The interval 1432–1475 is phenylalkylamine binding; sequence EYTCGSNFAIVYFISFYMLCAFLIINLFVAVIMDNFDYLTRDWS. The helical transmembrane segment at 1440–1464 threads the bilayer; the sequence is AIVYFISFYMLCAFLIINLFVAVIM. Residues 1465–2161 are Cytoplasmic-facing; sequence DNFDYLTRDW…ADEMICITTL (697 aa). Disordered regions lie at residues 1659 to 1678, 1684 to 1804, 1872 to 1919, and 2108 to 2152; these read SCDL…EDDV, ALLG…VKRT, PGRN…ASHR, and NGNV…EDLA. The span at 1745–1763 shows a compositional bias: polar residues; the sequence is SIGKQVPTSTNANLNNANM. Basic and acidic residues predominate over residues 1779–1797; it reads HVSENGHHSSHKHDREPQR. Over residues 2138 to 2152 the composition is skewed to acidic residues; the sequence is SDEEPDPGRDEEDLA.

Belongs to the calcium channel alpha-1 subunit (TC 1.A.1.11) family. CACNA1D subfamily. In terms of assembly, voltage-dependent calcium channels are multisubunit complexes, consisting of alpha-1, alpha-2, beta and delta subunits in a 1:1:1:1 ratio. The channel activity is directed by the pore-forming and voltage-sensitive alpha-1 subunit. In many cases, this subunit is sufficient to generate voltage-sensitive calcium channel activity. The auxiliary subunits beta and alpha-2/delta linked by a disulfide bridge regulate the channel activity. Channel activity is further modulated, depending on the presence of specific delta subunit isoforms. Interacts (via IQ domain) with CABP1 and CABP4 in a calcium independent manner. Interacts with RIMBP2. In terms of tissue distribution, expressed in pancreatic islets and in brain, where it has been seen in cerebral cortex, hippocampus, basal ganglia, habenula and thalamus. Expressed in the small cell lung carcinoma cell line SCC-9. No expression in skeletal muscle.

It localises to the membrane. The enzyme catalyses Ca(2+)(in) = Ca(2+)(out). Functionally, voltage-sensitive calcium channels (VSCC) mediate the entry of calcium ions into excitable cells and are also involved in a variety of calcium-dependent processes, including muscle contraction, hormone or neurotransmitter release, gene expression, cell motility, cell division and cell death. The isoform alpha-1D gives rise to L-type calcium currents. Long-lasting (L-type) calcium channels belong to the 'high-voltage activated' (HVA) group. They are blocked by dihydropyridines (DHP), phenylalkylamines, and by benzothiazepines. Voltage-sensitive calcium channels (VSCC) mediate the entry of calcium ions into excitable cells and are also involved in a variety of calcium-dependent processes, including muscle contraction, hormone or neurotransmitter release, gene expression, cell motility, cell division and cell death. The isoform alpha-1D gives rise to L-type calcium currents. The protein is Voltage-dependent L-type calcium channel subunit alpha-1D (CACNA1D) of Homo sapiens (Human).